The primary structure comprises 457 residues: MEDELLNFNYTDSGLPVIIKVIGVGGGGGNAVKNMYHGKVRDVSFLLCNTDVQALDRSEVPDRLVLGREVTNGLGAGSRPEVARRAAEASEADIRKILDDGHTRMVFVTAGMGGGTGTGAAPVIGRIARELNILTVGIVTIPFVFEGKRKILQALEGVEEMRKNVDALLVVNNERLRIIYKDLKLDNAFAKADETLTNAANGIAEMIMKEGTINLDFADVHTTLKDGGIAIISTGYGEGPDRMEQAINEALTSPLLNNNDIFKARRVLFNIYQGTEDPLGTDELSAINELTAKIETGFDTIWGYTTDPELGKKVKITILASGFDLDTTRESIRIGDNLGNVINDPISSREIETQNERDNDLINRYYRPDELEKVKVVDFKPIILNLDELDNDELIMALEEKPAYSRTGVLLSRIDNIRMRIAESAGRLKKDVVRSEESERPAFESERSSSPTTISFN.

GTP-binding positions include 26 to 30 (GGGGN), 115 to 117 (GTG), Glu146, Lys150, and Asp193. A compositionally biased stretch (basic and acidic residues) spans 429–447 (KKDVVRSEESERPAFESER). The tract at residues 429–457 (KKDVVRSEESERPAFESERSSSPTTISFN) is disordered. Positions 448–457 (SSSPTTISFN) are enriched in polar residues.

Belongs to the FtsZ family. In terms of assembly, homodimer. Polymerizes to form a dynamic ring structure in a strictly GTP-dependent manner. Interacts directly with several other division proteins.

It is found in the cytoplasm. Its function is as follows. Essential cell division protein that forms a contractile ring structure (Z ring) at the future cell division site. The regulation of the ring assembly controls the timing and the location of cell division. One of the functions of the FtsZ ring is to recruit other cell division proteins to the septum to produce a new cell wall between the dividing cells. Binds GTP and shows GTPase activity. The polypeptide is Cell division protein FtsZ (Porphyromonas gingivalis (strain ATCC BAA-308 / W83)).